The chain runs to 260 residues: Uroplakin-1b (260 aa).

The Cytoplasmic segment spans residues 2–15 (AKDDSTVRCFQGLL). Residues 16 to 36 (IFGNVIIGMCSIALMAECIFF) traverse the membrane as a helical segment. The Extracellular portion of the chain corresponds to 37–60 (VSDQNSLYPLLEATNNDDIYAAAW). A helical transmembrane segment spans residues 61-81 (IGMFVGICLFCLSVLGIVGIM). Topologically, residues 82-86 (KSNRK) are cytoplasmic. A helical membrane pass occupies residues 87–107 (ILLVYFILMFIVYAFEVASCI). Residues 108–229 (TAATQRDFFT…ELISGPMNRH (122 aa)) are Extracellular-facing. Residues 230 to 250 (AWGVAWFGFAILCWTFWVLLG) traverse the membrane as a helical segment. The Cytoplasmic segment spans residues 251–260 (TMFYWSRIDY).

Belongs to the tetraspanin (TM4SF) family. As to quaternary structure, heterodimer with uroplakin-3A (UPK3A) or uroplakin-3B (UPK3B). N-glycosylated with high-mannose oligosaccharides. Bladder epithelium.

It is found in the membrane. Functionally, component of the asymmetric unit membrane (AUM); a highly specialized biomembrane elaborated by terminally differentiated urothelial cells. May play an important role in normal bladder epithelial physiology, possibly in regulating membrane permeability of superficial umbrella cells or in stabilizing the apical membrane through AUM/cytoskeletal interactions. The polypeptide is Uroplakin-1b (UPK1B) (Bos taurus (Bovine)).